The sequence spans 324 residues: tRNA dimethylallyltransferase (324 aa).

17–24 (GPTASGKT) lines the ATP pocket. Substrate is bound at residue 19–24 (TASGKT). 4 interaction with substrate tRNA regions span residues 42 to 45 (DSAL), 166 to 170 (QRIQR), 251 to 256 (RCVGYR), and 284 to 291 (KRQITWLR).

Belongs to the IPP transferase family. As to quaternary structure, monomer. Mg(2+) serves as cofactor.

It catalyses the reaction adenosine(37) in tRNA + dimethylallyl diphosphate = N(6)-dimethylallyladenosine(37) in tRNA + diphosphate. Catalyzes the transfer of a dimethylallyl group onto the adenine at position 37 in tRNAs that read codons beginning with uridine, leading to the formation of N6-(dimethylallyl)adenosine (i(6)A). This is tRNA dimethylallyltransferase from Burkholderia orbicola (strain MC0-3).